The following is a 228-amino-acid chain: Probable septum site-determining protein MinC (228 aa).

Belongs to the MinC family. Interacts with MinD and FtsZ.

Cell division inhibitor that blocks the formation of polar Z ring septums. Rapidly oscillates between the poles of the cell to destabilize FtsZ filaments that have formed before they mature into polar Z rings. Prevents FtsZ polymerization. The sequence is that of Probable septum site-determining protein MinC from Oceanobacillus iheyensis (strain DSM 14371 / CIP 107618 / JCM 11309 / KCTC 3954 / HTE831).